Consider the following 210-residue polypeptide: Large ribosomal subunit protein bL25 (210 aa).

The tract at residues 1 to 23 (MSDIGTLSAKGRDRAGKGAARAT) is disordered.

This sequence belongs to the bacterial ribosomal protein bL25 family. CTC subfamily. Part of the 50S ribosomal subunit; part of the 5S rRNA/L5/L18/L25 subcomplex. Contacts the 5S rRNA. Binds to the 5S rRNA independently of L5 and L18.

Functionally, this is one of the proteins that binds to the 5S RNA in the ribosome where it forms part of the central protuberance. The chain is Large ribosomal subunit protein bL25 from Rhodospirillum rubrum (strain ATCC 11170 / ATH 1.1.1 / DSM 467 / LMG 4362 / NCIMB 8255 / S1).